A 504-amino-acid chain; its full sequence is Glycerol kinase (504 aa).

Thr12 is a binding site for ADP. Residues Thr12, Thr13, and Ser14 each coordinate ATP. Residue Thr12 coordinates sn-glycerol 3-phosphate. Arg16 is an ADP binding site. 4 residues coordinate sn-glycerol 3-phosphate: Arg82, Glu83, Tyr134, and Asp244. Glycerol-binding residues include Arg82, Glu83, Tyr134, Asp244, and Gln245. ADP is bound by residues Thr266 and Gly309. The ATP site is built by Thr266, Gly309, Gln313, and Gly410. The ADP site is built by Gly410 and Asn414.

The protein belongs to the FGGY kinase family. In terms of assembly, homotetramer and homodimer (in equilibrium).

The catalysed reaction is glycerol + ATP = sn-glycerol 3-phosphate + ADP + H(+). It functions in the pathway polyol metabolism; glycerol degradation via glycerol kinase pathway; sn-glycerol 3-phosphate from glycerol: step 1/1. Its activity is regulated as follows. Activated by phosphorylation and inhibited by fructose 1,6-bisphosphate (FBP). Functionally, key enzyme in the regulation of glycerol uptake and metabolism. Catalyzes the phosphorylation of glycerol to yield sn-glycerol 3-phosphate. The chain is Glycerol kinase from Alkaliphilus oremlandii (strain OhILAs) (Clostridium oremlandii (strain OhILAs)).